Reading from the N-terminus, the 130-residue chain is Small ribosomal subunit protein uS9 (130 aa).

The protein belongs to the universal ribosomal protein uS9 family.

The sequence is that of Small ribosomal subunit protein uS9 from Bordetella avium (strain 197N).